Here is a 249-residue protein sequence, read N- to C-terminus: 5'-nucleotidase SurE 2 (249 aa).

A divalent metal cation is bound by residues D8, D9, S40, and N90.

This sequence belongs to the SurE nucleotidase family. The cofactor is a divalent metal cation.

It is found in the cytoplasm. The catalysed reaction is a ribonucleoside 5'-phosphate + H2O = a ribonucleoside + phosphate. Functionally, nucleotidase that shows phosphatase activity on nucleoside 5'-monophosphates. This Pyrobaculum aerophilum (strain ATCC 51768 / DSM 7523 / JCM 9630 / CIP 104966 / NBRC 100827 / IM2) protein is 5'-nucleotidase SurE 2.